Consider the following 1494-residue polypeptide: Neuropathy target esterase sws (1494 aa).

The Lumenal portion of the chain corresponds to 1–35 (MDVLELLRVSGSNMYYSTFLADAWCYYISNQITMT). Residues 36 to 56 (MYLYCALGVLSMLFIGWFVYF) traverse the membrane as a helical segment. The Cytoplasmic segment spans residues 57-1494 (KRLARLRLRH…NTNNETKNYL (1438 aa)). 176–303 (IFGHFEKPIF…IRVIQVIMIR (128 aa)) is a binding site for a nucleoside 3',5'-cyclic phosphate. A compositionally biased stretch (low complexity) spans 362–372 (ASGTAGSTHTA). 2 disordered regions span residues 362–405 (ASGT…ELSG) and 422–452 (NSYPPLYHQRESDGNLSTRRGSITQQEQPEV). Residues 435 to 449 (GNLSTRRGSITQQEQ) are compositionally biased toward polar residues. S443 is subject to Phosphoserine. Residues 474–601 (ELGL…VVRR) and 590–717 (IVLD…LSHR) contribute to the a nucleoside 3',5'-cyclic phosphate site. The 167-residue stretch at 944–1110 (LVLGGGGARG…VNNLPGHLWR (167 aa)) folds into the PNPLA domain. A GXGXXG motif is present at residues 948-953 (GGGARG). Residues 975-979 (GVSIG) carry the GXSXG motif. S977 (nucleophile) is an active-site residue. The active-site Proton acceptor is the D1097. A DGA/G motif is present at residues 1097 to 1099 (DGG). Positions 1367-1494 (MDKATQSTPP…NTNNETKNYL (128 aa)) are disordered. A compositionally biased stretch (polar residues) spans 1370–1381 (ATQSTPPLQSKA). 2 stretches are compositionally biased toward basic and acidic residues: residues 1389 to 1420 (SKEEARHEWEIKREQKQELAREQELERERELS) and 1452 to 1483 (MDKKKTKDNDRDEVRGSAEDKGKEKEEDKENR). The segment covering 1484–1494 (SNTNNETKNYL) has biased composition (polar residues).

This sequence belongs to the NTE family. As to quaternary structure, interacts with Pka-C3; interaction inhibits the catalytic function of Pka-C3 and the esterase activity of sws.

The protein localises to the endoplasmic reticulum membrane. The catalysed reaction is a 1-acyl-sn-glycero-3-phosphocholine + H2O = sn-glycerol 3-phosphocholine + a fatty acid + H(+). Functionally, phospholipase B that deacylates intracellular phosphatidylcholine (PtdCho), generating glycerophosphocholine (GroPtdCho). This deacylation occurs at both sn-2 and sn-1 positions of PtdCho. Its specific chemical modification by certain organophosphorus (OP) compounds leads to distal axonopathy. Plays a role in the signaling mechanism between neurons and glia that regulates glia wrapping during development of the adult brain. Essential for membrane lipid homeostasis and cell survival in both neurons and glia of the adult brain. This is Neuropathy target esterase sws from Drosophila pseudoobscura pseudoobscura (Fruit fly).